Consider the following 293-residue polypeptide: Release factor glutamine methyltransferase (293 aa).

Residues 130–134, Asp-153, Trp-182, and Asn-199 contribute to the S-adenosyl-L-methionine site; that span reads GTGSG. A substrate-binding site is contributed by 199–202; that stretch reads NPPY.

This sequence belongs to the protein N5-glutamine methyltransferase family. PrmC subfamily.

The catalysed reaction is L-glutaminyl-[peptide chain release factor] + S-adenosyl-L-methionine = N(5)-methyl-L-glutaminyl-[peptide chain release factor] + S-adenosyl-L-homocysteine + H(+). Methylates the class 1 translation termination release factors RF1/PrfA and RF2/PrfB on the glutamine residue of the universally conserved GGQ motif. This is Release factor glutamine methyltransferase from Prochlorococcus marinus (strain SARG / CCMP1375 / SS120).